Reading from the N-terminus, the 406-residue chain is MKRAFILVLDSFGIGATADAKEFGDVGSDTLGHIADQCEKGLADNDKRQGALRLPNLSKLGLAMAHKESTGRFAPGLDADAEIIGAYGHAAELSSGKDTPSGHWEIAGVPVLFDWGYFTDKANSFPKELTDRILERAGLDGFLGNCHASGTQVLDDLGEEHMKTGQPIFYTSADSVFQIACHEETFGLDRLLELCQIAREELEDYNIGRVIARPFIGPGKGQFERTGNRRDLSVEPPSATVLQKLVEEKQGNVVSIGKIADIYANCGITKKVKATGIPALFEATLEQIKEAGDNTIVFTNFVDFDSAYGHRRDVAGYAAALEYFDGRINEVLELMGEDDVLILTADHGCDPTWPGTDHTREHIPVLVYGQKVPAGSLGRRETFADIGQTLASYFGTSPMDYGKNFL.

The Mn(2+) site is built by Asp10, Asp305, His310, Asp346, His347, and His358.

It belongs to the phosphopentomutase family. It depends on Mn(2+) as a cofactor.

It is found in the cytoplasm. The catalysed reaction is 2-deoxy-alpha-D-ribose 1-phosphate = 2-deoxy-D-ribose 5-phosphate. The enzyme catalyses alpha-D-ribose 1-phosphate = D-ribose 5-phosphate. The protein operates within carbohydrate degradation; 2-deoxy-D-ribose 1-phosphate degradation; D-glyceraldehyde 3-phosphate and acetaldehyde from 2-deoxy-alpha-D-ribose 1-phosphate: step 1/2. Its function is as follows. Isomerase that catalyzes the conversion of deoxy-ribose 1-phosphate (dRib-1-P) and ribose 1-phosphate (Rib-1-P) to deoxy-ribose 5-phosphate (dRib-5-P) and ribose 5-phosphate (Rib-5-P), respectively. The chain is Phosphopentomutase from Vibrio parahaemolyticus serotype O3:K6 (strain RIMD 2210633).